We begin with the raw amino-acid sequence, 191 residues long: Peptidyl-tRNA hydrolase (191 aa).

Tyr-16 serves as a coordination point for tRNA. His-21 functions as the Proton acceptor in the catalytic mechanism. TRNA contacts are provided by Phe-67, Asn-69, and Asn-115.

The protein belongs to the PTH family. Monomer.

Its subcellular location is the cytoplasm. The catalysed reaction is an N-acyl-L-alpha-aminoacyl-tRNA + H2O = an N-acyl-L-amino acid + a tRNA + H(+). Hydrolyzes ribosome-free peptidyl-tRNAs (with 1 or more amino acids incorporated), which drop off the ribosome during protein synthesis, or as a result of ribosome stalling. In terms of biological role, catalyzes the release of premature peptidyl moieties from peptidyl-tRNA molecules trapped in stalled 50S ribosomal subunits, and thus maintains levels of free tRNAs and 50S ribosomes. The sequence is that of Peptidyl-tRNA hydrolase from Ruthia magnifica subsp. Calyptogena magnifica.